A 145-amino-acid polypeptide reads, in one-letter code: MNFKYIVAVSFLIASAYARSVQNDEQSLSQRDVLEEESLREIRSIGAKILGGVKTFFKGALKELASTYLQQKRTAEEQHEVMKRLEAVMRDLDSLDHPEEASERETRGFNQEEIANLFTKKEKRILGPVISKIGGVLGGLLKNLG.

An N-terminal signal peptide occupies residues 1-18 (MNFKYIVAVSFLIASAYA). Propeptides lie at residues 19 to 43 (RSVQ…REIR) and 74 to 124 (TAEE…KEKR). Position 144 is a leucine amide (Leu144).

Belongs to the bombinin family. As to expression, expressed by the skin glands.

Its subcellular location is the secreted. Maximin-5 shows antibacterial activity against both Gram-positive and Gram-negative bacteria. The only exception is the resistance of E.coli. Also shows antimicrobial activity against fungi C.albicans, A.flavus and P.uticale. It has little hemolytic activity. It does not possess a significant cytotoxicity against tumor cell lines. It does not possess a significant anti-HIV activity. In terms of biological role, maximin-H4 shows antibacterial activity against both Gram-positive and Gram-negative bacteria. It also shows antimicrobial activity against the fungus C.albicans. Shows strong hemolytic activity. The polypeptide is Maximins 5/H4 type 2 (Bombina maxima (Giant fire-bellied toad)).